Here is a 552-residue protein sequence, read N- to C-terminus: FERRY endosomal RAB5 effector complex subunit 3 (552 aa).

The residue at position 79 (Ser79) is a Phosphoserine.

In terms of assembly, component of the FERRY complex composed of five subunits, TBCK, PPP1R21, FERRY3, CRYZL1 and GATD1 with a ratio of 1:2:1:2:4, respectively.

The protein resides in the cytoplasm. It is found in the early endosome. Component of the FERRY complex (Five-subunit Endosomal Rab5 and RNA/ribosome intermediary). The FERRY complex directly interacts with mRNAs and RAB5A, and functions as a RAB5A effector involved in the localization and the distribution of specific mRNAs most likely by mediating their endosomal transport. The complex recruits mRNAs and ribosomes to early endosomes through direct mRNA-interaction. Plays a role in mast cell degranulation. The protein is FERRY endosomal RAB5 effector complex subunit 3 of Mus musculus (Mouse).